We begin with the raw amino-acid sequence, 189 residues long: MTEYKLVVVGAGGVGKSALTIQLIQNHFVDEYDPTIEDSYRKQVVIDGETCLLDILDTAGQEEYSAMRDQYMRTGEGFLLVFAVNSAKSFEDIGTYREQIKRVKDAEEVPMVLVGNKCDLTTWNVKNEQAREVAKQYGIPYIETSAKTRMGVDDAFYTLVREIRKDKDNKGRRGRKLNKPNRRFKCKIL.

A GTP-binding site is contributed by 10–17 (GAGGVGKS). Positions 32 to 40 (YDPTIEDSY) match the Effector region motif. Residues 57–61 (DTAGQ) and 116–119 (NKCD) each bind GTP. Cysteine methyl ester is present on C186. C186 carries S-geranylgeranyl cysteine lipidation. Positions 187–189 (KIL) are cleaved as a propeptide — removed in mature form.

It belongs to the small GTPase superfamily. Ras family.

Its subcellular location is the cell membrane. The enzyme catalyses GTP + H2O = GDP + phosphate + H(+). Its activity is regulated as follows. Alternates between an inactive form bound to GDP and an active form bound to GTP. Activated by a guanine nucleotide-exchange factor (GEF) and inactivated by a GTPase-activating protein (GAP). In terms of biological role, ras proteins bind GDP/GTP and possess intrinsic GTPase activity. Plays a role in eye development by regulating cell growth, survival of postmitotic ommatidial cells and differentiation of photoreceptor cells. During larval development, mediates Ptth/tor signaling leading to the production of ecdysone, a hormone required for the initiation of metamorphosis. In Drosophila persimilis (Fruit fly), this protein is Ras-like protein 1.